The primary structure comprises 181 residues: Inner membrane-spanning protein YciB (181 aa).

The next 5 helical transmembrane spans lie at 10–30, 50–70, 80–100, 120–140, and 148–168; these read LIIF…GALI, MQLI…ALHD, IVYV…KPAI, WAWV…AYHL, and FKVF…GGYI.

This sequence belongs to the YciB family.

It is found in the cell inner membrane. Plays a role in cell envelope biogenesis, maintenance of cell envelope integrity and membrane homeostasis. The sequence is that of Inner membrane-spanning protein YciB from Vibrio cholerae serotype O1 (strain ATCC 39541 / Classical Ogawa 395 / O395).